A 239-amino-acid chain; its full sequence is Ribonuclease PH (239 aa).

Residues arginine 86 and 124-126 contribute to the phosphate site; that span reads GTR.

It belongs to the RNase PH family. As to quaternary structure, homohexameric ring arranged as a trimer of dimers.

It catalyses the reaction tRNA(n+1) + phosphate = tRNA(n) + a ribonucleoside 5'-diphosphate. Functionally, phosphorolytic 3'-5' exoribonuclease that plays an important role in tRNA 3'-end maturation. Removes nucleotide residues following the 3'-CCA terminus of tRNAs; can also add nucleotides to the ends of RNA molecules by using nucleoside diphosphates as substrates, but this may not be physiologically important. Probably plays a role in initiation of 16S rRNA degradation (leading to ribosome degradation) during starvation. This Sodalis glossinidius (strain morsitans) protein is Ribonuclease PH.